The following is a 391-amino-acid chain: Terminal nucleotidyltransferase 5C (391 aa).

It belongs to the TENT family. As to quaternary structure, interacts with BCCIP and PABPC1; the interaction has no effect on TENT5C poly(A) polymerase function. Interacts with PLK4; this interaction leads to the TENT5C recruitment into the centrosome. Expressed by splenocytes, expression is increased in activated splenocytes.

It localises to the nucleus. Its subcellular location is the cytoplasm. The protein resides in the cytoskeleton. It is found in the microtubule organizing center. The protein localises to the centrosome. It carries out the reaction RNA(n) + ATP = RNA(n)-3'-adenine ribonucleotide + diphosphate. Catalyzes the transfer of one adenosine molecule from an ATP to an mRNA poly(A) tail bearing a 3'-OH terminal group and enhances mRNA stability and gene expression. Can also elongate RNA oligos ending with uridine molecule, provided that the sequence is adenosine-rich. Mainly targets mRNAs encoding endoplasmic reticulum-targeted protein. In Mus musculus (Mouse), this protein is Terminal nucleotidyltransferase 5C.